Reading from the N-terminus, the 170-residue chain is ATP synthase subunit b (170 aa).

A helical transmembrane segment spans residues 15 to 37; sequence GDILFQLLAMLILLALLKKYALG.

It belongs to the ATPase B chain family. F-type ATPases have 2 components, F(1) - the catalytic core - and F(0) - the membrane proton channel. F(1) has five subunits: alpha(3), beta(3), gamma(1), delta(1), epsilon(1). F(0) has three main subunits: a(1), b(2) and c(10-14). The alpha and beta chains form an alternating ring which encloses part of the gamma chain. F(1) is attached to F(0) by a central stalk formed by the gamma and epsilon chains, while a peripheral stalk is formed by the delta and b chains. The F(1)F(0) complex interacts with SpoIIIJ and YqjG; YqgA is found in the same complex.

It localises to the cell membrane. In terms of biological role, f(1)F(0) ATP synthase produces ATP from ADP in the presence of a proton or sodium gradient. F-type ATPases consist of two structural domains, F(1) containing the extramembraneous catalytic core and F(0) containing the membrane proton channel, linked together by a central stalk and a peripheral stalk. During catalysis, ATP synthesis in the catalytic domain of F(1) is coupled via a rotary mechanism of the central stalk subunits to proton translocation. Functionally, component of the F(0) channel, it forms part of the peripheral stalk, linking F(1) to F(0). The protein is ATP synthase subunit b of Bacillus subtilis (strain 168).